The sequence spans 310 residues: ADP-L-glycero-D-manno-heptose-6-epimerase (310 aa).

NADP(+)-binding positions include 10–11 (FI), 31–32 (DN), K38, K53, 75–79 (EGACS), and N92. Catalysis depends on Y140, which acts as the Proton acceptor. K144 provides a ligand contact to NADP(+). N169 contacts substrate. The NADP(+) site is built by V170 and K178. K178 (proton acceptor) is an active-site residue. Residues S180, H187, 201 to 204 (FEGS), R209, and Y272 each bind substrate.

Belongs to the NAD(P)-dependent epimerase/dehydratase family. HldD subfamily. As to quaternary structure, homopentamer. The cofactor is NADP(+).

The catalysed reaction is ADP-D-glycero-beta-D-manno-heptose = ADP-L-glycero-beta-D-manno-heptose. It functions in the pathway nucleotide-sugar biosynthesis; ADP-L-glycero-beta-D-manno-heptose biosynthesis; ADP-L-glycero-beta-D-manno-heptose from D-glycero-beta-D-manno-heptose 7-phosphate: step 4/4. It participates in bacterial outer membrane biogenesis; LPS core biosynthesis. Catalyzes the interconversion between ADP-D-glycero-beta-D-manno-heptose and ADP-L-glycero-beta-D-manno-heptose via an epimerization at carbon 6 of the heptose. The protein is ADP-L-glycero-D-manno-heptose-6-epimerase of Klebsiella pneumoniae.